Consider the following 132-residue polypeptide: Large ribosomal subunit protein uL14 (132 aa).

This sequence belongs to the universal ribosomal protein uL14 family. Part of the 50S ribosomal subunit. Forms a cluster with proteins L3 and L24e, part of which may contact the 16S rRNA in 2 intersubunit bridges.

Binds to 23S rRNA. Forms part of two intersubunit bridges in the 70S ribosome. In Halobacterium salinarum (strain ATCC 29341 / DSM 671 / R1), this protein is Large ribosomal subunit protein uL14.